An 899-amino-acid chain; its full sequence is Protein translocase subunit SecA (899 aa).

ATP contacts are provided by residues Q87, G105–T109, and D516. Residues C884, C886, C895, and H896 each contribute to the Zn(2+) site.

Belongs to the SecA family. Monomer and homodimer. Part of the essential Sec protein translocation apparatus which comprises SecA, SecYEG and auxiliary proteins SecDF. Other proteins may also be involved. Zn(2+) serves as cofactor.

Its subcellular location is the cell inner membrane. It localises to the cytoplasm. It catalyses the reaction ATP + H2O + cellular proteinSide 1 = ADP + phosphate + cellular proteinSide 2.. Functionally, part of the Sec protein translocase complex. Interacts with the SecYEG preprotein conducting channel. Has a central role in coupling the hydrolysis of ATP to the transfer of proteins into and across the cell membrane, serving as an ATP-driven molecular motor driving the stepwise translocation of polypeptide chains across the membrane. The sequence is that of Protein translocase subunit SecA from Borreliella burgdorferi (strain ATCC 35210 / DSM 4680 / CIP 102532 / B31) (Borrelia burgdorferi).